The chain runs to 404 residues: MHC class I-like protein MILL1 (404 aa).

The signal sequence occupies residues 1–30 (MMLSRDLRAEAAVRLWIMFLLLEDLLGACA). Residues 59 to 150 (EVAGPHTLRY…VTGQKGQDKG (92 aa)) are alpha-1. N-linked (GlcNAc...) asparagine glycosylation is found at Asn98, Asn102, and Asn165. The interval 151 to 242 (LHILQATLGC…SLRSEPLDTG (92 aa)) is alpha-2. Disulfide bonds link Cys160–Cys223 and Cys262–Cys322. An Ig-like C1-type domain is found at 224 to 338 (PAQLQRHLAS…GNIEKRAVIV (115 aa)). Positions 243 to 342 (SPMVIVTFRN…KRAVIVNTVS (100 aa)) are alpha-3. An N-linked (GlcNAc...) asparagine glycan is attached at Asn323. The tract at residues 343–373 (GEKTRQPSTSGVGGRVKKSLWTTMTTAFMVT) is connecting peptide. The GPI-anchor amidated serine moiety is linked to residue Ser374. A propeptide spans 375–404 (WTRKTGGDSTLLLLWWLLFFSTVLAVLTLV) (removed in mature form).

The protein belongs to the MHC class I family. As to quaternary structure, heterodimer with B2M. Detected in skin, esophagus, tongue, skin, muscle, uterus, ovary, testis and epididymis.

The protein localises to the cell membrane. This Rattus norvegicus (Rat) protein is MHC class I-like protein MILL1.